We begin with the raw amino-acid sequence, 285 residues long: Protoheme IX farnesyltransferase (285 aa).

9 consecutive transmembrane segments (helical) span residues 13–33, 40–60, 89–109, 110–130, 137–157, 165–185, 194–214, 230–252, and 265–285; these read LGKL…AFLA, LLPI…AMII, EAII…FIDN, ILTA…YTIL, LNIV…YTSL, GFLL…SLAL, AHYP…AIAI, INLI…SYRL, and FIFS…VKLI.

The protein belongs to the UbiA prenyltransferase family. Protoheme IX farnesyltransferase subfamily.

The protein localises to the cell membrane. It carries out the reaction heme b + (2E,6E)-farnesyl diphosphate + H2O = Fe(II)-heme o + diphosphate. It functions in the pathway porphyrin-containing compound metabolism; heme O biosynthesis; heme O from protoheme: step 1/1. Functionally, converts heme B (protoheme IX) to heme O by substitution of the vinyl group on carbon 2 of heme B porphyrin ring with a hydroxyethyl farnesyl side group. The chain is Protoheme IX farnesyltransferase from Saccharolobus islandicus (strain Y.N.15.51 / Yellowstone #2) (Sulfolobus islandicus).